A 174-amino-acid polypeptide reads, in one-letter code: Negative modulator of initiation of replication (174 aa).

It belongs to the SeqA family. As to quaternary structure, homodimer. Polymerizes to form helical filaments.

Its subcellular location is the cytoplasm. Negative regulator of replication initiation, which contributes to regulation of DNA replication and ensures that replication initiation occurs exactly once per chromosome per cell cycle. Binds to pairs of hemimethylated GATC sequences in the oriC region, thus preventing assembly of replication proteins and re-initiation at newly replicated origins. Repression is relieved when the region becomes fully methylated. The protein is Negative modulator of initiation of replication of Pseudoalteromonas atlantica (strain T6c / ATCC BAA-1087).